A 389-amino-acid chain; its full sequence is NADH-quinone oxidoreductase subunit D (389 aa).

It belongs to the complex I 49 kDa subunit family. As to quaternary structure, NDH-1 is composed of 14 different subunits. Subunits NuoB, C, D, E, F, and G constitute the peripheral sector of the complex.

It localises to the cell inner membrane. It carries out the reaction a quinone + NADH + 5 H(+)(in) = a quinol + NAD(+) + 4 H(+)(out). Functionally, NDH-1 shuttles electrons from NADH, via FMN and iron-sulfur (Fe-S) centers, to quinones in the respiratory chain. The immediate electron acceptor for the enzyme in this species is believed to be ubiquinone. Couples the redox reaction to proton translocation (for every two electrons transferred, four hydrogen ions are translocated across the cytoplasmic membrane), and thus conserves the redox energy in a proton gradient. The sequence is that of NADH-quinone oxidoreductase subunit D from Rickettsia prowazekii (strain Madrid E).